Reading from the N-terminus, the 193-residue chain is Thymidine kinase (193 aa).

Residues 9 to 16 (STMNAGKS) and 87 to 90 (DEAN) each bind ATP. E88 serves as the catalytic Proton acceptor. Positions 145, 147, 182, and 185 each coordinate Zn(2+).

The protein belongs to the thymidine kinase family. Homotetramer.

The protein localises to the cytoplasm. The catalysed reaction is thymidine + ATP = dTMP + ADP + H(+). In Agrobacterium fabrum (strain C58 / ATCC 33970) (Agrobacterium tumefaciens (strain C58)), this protein is Thymidine kinase.